Reading from the N-terminus, the 161-residue chain is Small ribosomal subunit protein uS9 (161 aa).

The interval 1 to 38 (MAQTITSLADLKQGPGAEPAGLSAEPQEPKLDKEGRAY) is disordered. A compositionally biased stretch (basic and acidic residues) spans 27-38 (QEPKLDKEGRAY).

It belongs to the universal ribosomal protein uS9 family.

This is Small ribosomal subunit protein uS9 from Rhodospirillum centenum (strain ATCC 51521 / SW).